A 610-amino-acid polypeptide reads, in one-letter code: DNA mismatch repair protein MutL (610 aa).

This sequence belongs to the DNA mismatch repair MutL/HexB family.

Functionally, this protein is involved in the repair of mismatches in DNA. It is required for dam-dependent methyl-directed DNA mismatch repair. May act as a 'molecular matchmaker', a protein that promotes the formation of a stable complex between two or more DNA-binding proteins in an ATP-dependent manner without itself being part of a final effector complex. In Rickettsia rickettsii (strain Sheila Smith), this protein is DNA mismatch repair protein MutL.